The sequence spans 34 residues: Photosystem II reaction center protein Psb30 (34 aa).

The helical transmembrane segment at 6-26 (VIAQLVSLGVIVLVGPAVIIL) threads the bilayer.

It belongs to the Psb30/Ycf12 family. In terms of assembly, PSII is composed of 1 copy each of membrane proteins PsbA, PsbB, PsbC, PsbD, PsbE, PsbF, PsbH, PsbI, PsbJ, PsbK, PsbL, PsbM, PsbT, PsbX, PsbY, PsbZ, Psb30/Ycf12, peripheral proteins of the oxygen-evolving complex and a large number of cofactors. It forms dimeric complexes.

It is found in the plastid. The protein resides in the chloroplast thylakoid membrane. In terms of biological role, a core subunit of photosystem II (PSII), probably helps stabilize the reaction center. The polypeptide is Photosystem II reaction center protein Psb30 (Pyropia yezoensis (Susabi-nori)).